The chain runs to 389 residues: Alanine racemase TOXG (389 aa).

At Lys-235 the chain carries N6-(pyridoxal phosphate)lysine.

It belongs to the threonine aldolase family. It depends on pyridoxal 5'-phosphate as a cofactor.

It catalyses the reaction L-alanine = D-alanine. The protein operates within mycotoxin biosynthesis; HC-toxin biosynthesis. Alanine racemase, part of the diffuse TOX2 gene cluster that mediates the biosynthesis of the HC-toxin, cyclic tetrapeptide of structure cyclo(D-Pro-L-Ala-D-Ala-L-Aeo), where Aeo stands for 2-amino-9,10-epoxi-8-oxodecanoic acid. HC-toxin is a determinant of specificity and virulence in the interaction between the producing fungus and its host, maize. TOXG catalyzes the conversion of L-alanine into D-alanine, an essential precursor for the production of the major forms of HC-toxin by the non-ribosomal peptide synthetase HTS1. This chain is Alanine racemase TOXG, found in Cochliobolus carbonum (Maize leaf spot fungus).